A 592-amino-acid polypeptide reads, in one-letter code: Aspartate--tRNA ligase (592 aa).

Glu173 serves as a coordination point for L-aspartate. Residues 197-200 (QLFK) form an aspartate region. L-aspartate is bound at residue Arg219. ATP-binding positions include 219–221 (RDE) and Gln228. L-aspartate is bound at residue His448. Glu482 is a binding site for ATP. L-aspartate is bound at residue Arg489. 534–537 (GLDR) is a binding site for ATP.

The protein belongs to the class-II aminoacyl-tRNA synthetase family. Type 1 subfamily. Homodimer.

The protein localises to the cytoplasm. The enzyme catalyses tRNA(Asp) + L-aspartate + ATP = L-aspartyl-tRNA(Asp) + AMP + diphosphate. Catalyzes the attachment of L-aspartate to tRNA(Asp) in a two-step reaction: L-aspartate is first activated by ATP to form Asp-AMP and then transferred to the acceptor end of tRNA(Asp). This Shewanella baltica (strain OS155 / ATCC BAA-1091) protein is Aspartate--tRNA ligase.